Here is a 264-residue protein sequence, read N- to C-terminus: Small ribosomal subunit protein eS1B (264 aa).

Residues 233-264 (GEGGGSGKPAADETGAKVERADGYEPPVQESV) form a disordered region. Basic and acidic residues predominate over residues 242-255 (AADETGAKVERADG).

The protein belongs to the eukaryotic ribosomal protein eS1 family. In terms of assembly, component of the small ribosomal subunit. Mature ribosomes consist of a small (40S) and a large (60S) subunit. The 40S subunit contains about 33 different proteins and 1 molecule of RNA (18S). The 60S subunit contains about 49 different proteins and 3 molecules of RNA (28S, 5.8S and 5S). Part of the small subunit (SSU) processome, composed of more than 70 proteins and the RNA chaperone small nucleolar RNA (snoRNA) U3.

The protein resides in the cytoplasm. It localises to the nucleus. The protein localises to the nucleolus. In terms of biological role, component of the small ribosomal subunit. The ribosome is a large ribonucleoprotein complex responsible for the synthesis of proteins in the cell. Part of the small subunit (SSU) processome, first precursor of the small eukaryotic ribosomal subunit. During the assembly of the SSU processome in the nucleolus, many ribosome biogenesis factors, an RNA chaperone and ribosomal proteins associate with the nascent pre-rRNA and work in concert to generate RNA folding, modifications, rearrangements and cleavage as well as targeted degradation of pre-ribosomal RNA by the RNA exosome. May play a role during erythropoiesis. The chain is Small ribosomal subunit protein eS1B (rps3a-b) from Xenopus laevis (African clawed frog).